A 487-amino-acid chain; its full sequence is WAS/WASL-interacting protein family member 1 (487 aa).

Pro residues predominate over residues Met1–Thr14. The interval Met1 to Arg487 is disordered. The span at Glu21–Ala31 shows a compositional bias: polar residues. The region spanning Gly32 to Thr49 is the WH2 domain. Arg33 carries the post-translational modification Asymmetric dimethylarginine. Residues Lys45 to Lys48 are binds actin. Residues Gly64 to Phe100 show a composition bias toward gly residues. 2 positions are modified to omega-N-methylarginine: Arg121 and Arg130. Over residues Pro136–Pro147 the composition is skewed to low complexity. Ser138 is modified (phosphoserine). Pro residues-rich tracts occupy residues Pro157–Pro170 and Ser178–Ile190. Phosphoserine is present on Ser222. Composition is skewed to pro residues over residues Phe234–Pro243, Val269–Pro285, and Ala293–Pro309. The residue at position 324 (Ser324) is a Phosphoserine. Pro residues predominate over residues Pro328 to Asp355. Position 329 is a phosphothreonine (Thr329). Phosphoserine is present on Ser334. XRSGPXPPXP motif repeat units lie at residues Gly336–Pro345, Gly358–Pro367, and Pro394–Pro403. Residues Gly397–Ser418 show a composition bias toward pro residues. Residues Thr419–Ser428 are compositionally biased toward polar residues. Positions Ala464–Gly478 are enriched in basic and acidic residues.

The protein belongs to the verprolin family. As to quaternary structure, binds to WAS within the N-terminal region, at a site distinct from the CDC42-binding site. Binds profilin and actin. Interacts with DBNL. Binds to WASL. Interacts with DBNL. Interacts with FNBP1L (via the SH3 domain). As to expression, isoforms were differentially expressed. One isoform was ubiquitously expressed, another was muscle-specific and another was expressed in the liver, heart and testis.

The protein resides in the cytoplasmic vesicle. Its subcellular location is the cytoplasm. It localises to the cytoskeleton. The protein localises to the cell projection. It is found in the ruffle. Functionally, plays a role in the reorganization of the actin cytoskeleton. Contributes with NCK1 and GRB2 in the recruitment and activation of WASL. Plays a role in the formation of cell ruffles. May participate in regulating the subcellular localization of WASL, resulting in the disassembly of stress fibers in favor of filopodia formation. The protein is WAS/WASL-interacting protein family member 1 (Wipf1) of Rattus norvegicus (Rat).